The following is a 597-amino-acid chain: Elongation factor 4 (597 aa).

One can recognise a tr-type G domain in the interval 2-184 (KHIRNFSIIA…NIVSAIPAPE (183 aa)). Residues 14 to 19 (DHGKST) and 131 to 134 (NKID) contribute to the GTP site.

Belongs to the TRAFAC class translation factor GTPase superfamily. Classic translation factor GTPase family. LepA subfamily.

Its subcellular location is the cell inner membrane. It carries out the reaction GTP + H2O = GDP + phosphate + H(+). Functionally, required for accurate and efficient protein synthesis under certain stress conditions. May act as a fidelity factor of the translation reaction, by catalyzing a one-codon backward translocation of tRNAs on improperly translocated ribosomes. Back-translocation proceeds from a post-translocation (POST) complex to a pre-translocation (PRE) complex, thus giving elongation factor G a second chance to translocate the tRNAs correctly. Binds to ribosomes in a GTP-dependent manner. The chain is Elongation factor 4 from Vibrio parahaemolyticus serotype O3:K6 (strain RIMD 2210633).